A 1296-amino-acid chain; its full sequence is DNA-directed RNA polymerase subunit beta' (1296 aa).

Residues C60, C62, C75, and C78 each coordinate Zn(2+). 3 residues coordinate Mg(2+): D535, D537, and D539. Zn(2+) contacts are provided by C877, C954, C961, and C964.

This sequence belongs to the RNA polymerase beta' chain family. The RNAP catalytic core consists of 2 alpha, 1 beta, 1 beta' and 1 omega subunit. When a sigma factor is associated with the core the holoenzyme is formed, which can initiate transcription. Requires Mg(2+) as cofactor. The cofactor is Zn(2+).

It carries out the reaction RNA(n) + a ribonucleoside 5'-triphosphate = RNA(n+1) + diphosphate. Functionally, DNA-dependent RNA polymerase catalyzes the transcription of DNA into RNA using the four ribonucleoside triphosphates as substrates. The polypeptide is DNA-directed RNA polymerase subunit beta' (Beutenbergia cavernae (strain ATCC BAA-8 / DSM 12333 / CCUG 43141 / JCM 11478 / NBRC 16432 / NCIMB 13614 / HKI 0122)).